The primary structure comprises 113 residues: MADSCIFCKIAQKQIPSTIVYEDDEIFAFKDINPIAPIHILVIPKQHIASLNEITEENEAFIGKVLYKVSLIGKKECPEGYRVVNNIGEDAGQTVKHIHFHILGGKKLAWDKL.

Zn(2+) is bound by residues Cys5 and Cys8. Residues 6 to 113 form the HIT domain; sequence IFCKIAQKQI…GGKKLAWDKL (108 aa). Asp31 is a binding site for AMP. A Zn(2+)-binding site is contributed by His47. Residues Asn86, Gly92, and Thr94 each contribute to the AMP site. Residue His97 participates in Zn(2+) binding. A Histidine triad motif motif is present at residues 97–101; that stretch reads HIHFH. AMP is bound by residues His99 and His101. The Tele-AMP-histidine intermediate role is filled by His99.

Belongs to the HINT family.

It is found in the nucleus. Its subcellular location is the cytoplasm. The catalysed reaction is adenosine 5'-phosphoramidate + H2O = AMP + NH4(+). Functionally, hydrolyzes purine nucleotide phosphoramidates with a single phosphate group, including adenosine 5'monophosphoramidate (AMP-NH2), adenosine 5'monophosphomorpholidate (AMP-morpholidate) and guanosine 5'monophosphomorpholidate (GMP-morpholidate). Hydrolyzes lysyl-AMP (AMP-N-epsilon-(N-alpha-acetyl lysine methyl ester)) generated by lysine tRNA ligase, as well as Met-AMP, His-AMP and Asp-AMP, lysyl-GMP (GMP-N-epsilon-(N-alpha-acetyl lysine methyl ester)) and AMP-N-alanine methyl ester. May also function as scaffolding protein that mediates protein-protein interactions. This chain is Histidine triad nucleotide-binding protein, found in Entamoeba histolytica (strain ATCC 30459 / HM-1:IMSS / ABRM).